The sequence spans 590 residues: NADH-ubiquinone oxidoreductase chain 5 (590 aa).

Helical transmembrane passes span 1–21 (MFLIFFLFFIMFGFISGSFMF), 28–48 (FWLSLVMIIFIVLCMIFSFLM), 58–78 (YYDFCLILMLDFCFIWLTYVC), 81–101 (FYMFIMLLINMVFCFIVFYAF), 113–133 (FLIIFWIFVVCMNLFILSYDF), 136–156 (AYCGWELLGLFSFFLISYFWY), 176–198 (VLLIFAFSIIFLSNGFCMTTFYF), 245–265 (ALIHAATLVVCGIILLSFVYW), 273–293 (YFYNLIGWSTLILILMTLCVF), 310–330 (ISFSMFCCLCIDIYIGSLFFC), 333–353 (MFYKATLFIVLGIWIHIFFGL), 372–392 (LLLIFAILNSCSIWFLCGFYC), 395–415 (MLLALLMLLSFYNIIEFLFIS), 428–450 (FLLFFLMFVFKCFCLVDCLFLLF), 461–481 (ISLYMCILSIFFIIDFVCIFV), 501–521 (IAIFVVFLILSVGFLYYGCLF), 536–556 (IFFVIIILVVFMIFCCWYFVC), and 568–588 (FVIYFRYNLKYCLFFCILWIL).

Belongs to the complex I subunit 5 family.

It is found in the mitochondrion inner membrane. The catalysed reaction is a ubiquinone + NADH + 5 H(+)(in) = a ubiquinol + NAD(+) + 4 H(+)(out). In terms of biological role, core subunit of the mitochondrial membrane respiratory chain NADH dehydrogenase (Complex I) that is believed to belong to the minimal assembly required for catalysis. Complex I functions in the transfer of electrons from NADH to the respiratory chain. The immediate electron acceptor for the enzyme is believed to be ubiquinone. This is NADH-ubiquinone oxidoreductase chain 5 (ND5) from Trypanosoma brucei brucei.